Consider the following 138-residue polypeptide: Small ribosomal subunit protein uS11c (138 aa).

Belongs to the universal ribosomal protein uS11 family. Part of the 30S ribosomal subunit.

It localises to the plastid. Its subcellular location is the chloroplast. This chain is Small ribosomal subunit protein uS11c, found in Nandina domestica (Heavenly bamboo).